The following is a 139-amino-acid chain: ATP synthase epsilon chain (139 aa).

The disordered stretch occupies residues 89–110; it reads EARAEQARAEAEARRREAQSER.

It belongs to the ATPase epsilon chain family. As to quaternary structure, F-type ATPases have 2 components, CF(1) - the catalytic core - and CF(0) - the membrane proton channel. CF(1) has five subunits: alpha(3), beta(3), gamma(1), delta(1), epsilon(1). CF(0) has three main subunits: a, b and c.

The protein resides in the cell membrane. Produces ATP from ADP in the presence of a proton gradient across the membrane. This is ATP synthase epsilon chain from Chloroflexus aurantiacus (strain ATCC 29366 / DSM 635 / J-10-fl).